A 380-amino-acid polypeptide reads, in one-letter code: GDSL esterase/lipase At3g26430 (380 aa).

A signal peptide spans 1-25; sequence METNLLLVKCVLLASCLIHPRACSP. Serine 38 acts as the Nucleophile in catalysis. N-linked (GlcNAc...) asparagine glycans are attached at residues asparagine 97, asparagine 115, and asparagine 183. Active-site residues include aspartate 346 and histidine 349.

This sequence belongs to the 'GDSL' lipolytic enzyme family.

The protein resides in the secreted. The enzyme catalyses hexadecanoate ester + H2O = an aliphatic alcohol + hexadecanoate + H(+). It catalyses the reaction a butanoate ester + H2O = an aliphatic alcohol + butanoate + H(+). Its activity is regulated as follows. Lipase activity is inhibited by phenylmethylsulfonyl fluoride (PMSF), but not neostigmine bromide (NB). Functionally, lipase that can hydrolyze p-nitrophenyl butyrate and p-nitrophenyl palmitate in vitro. Possesses low activity against p-nitrophenyl acetate. Substrate preference is p-nitrophenyl palmitate &gt; p-nitrophenyl butyrate &gt;&gt; p-nitrophenyl acetate. Lacks cholinesterase activity. This is GDSL esterase/lipase At3g26430 from Arabidopsis thaliana (Mouse-ear cress).